A 277-amino-acid polypeptide reads, in one-letter code: GATA transcription factor 15 (277 aa).

The segment at 52 to 94 (AYDDHSTVTTSPSSPSSSSTGSVDCTLSLGTPSSRRAEPVAAA) is disordered. Residues 58 to 74 (TVTTSPSSPSSSSTGSV) are compositionally biased toward low complexity. A GATA-type zinc finger spans residues 154–179 (CANCGTASTPLWRNGPRGPKSLCNAC).

Belongs to the type IV zinc-finger family. Class B subfamily.

Functionally, probable transcription factor that regulates organogenesis during transition from the vegetative to the reproductive phase. Regulates the expression of CYP78A11/PLA1, HD3A and MADS1 during reproductive development in rice. May act upstream of CYP78A11/PLA1 during panicle development. Acts independently of the photoperiodic and gibberellin signaling pathways. The polypeptide is GATA transcription factor 15 (Oryza sativa subsp. indica (Rice)).